Reading from the N-terminus, the 856-residue chain is DNA mismatch repair protein MutS (856 aa).

Residue 623–630 (GPNMSGKS) coordinates ATP.

The protein belongs to the DNA mismatch repair MutS family.

In terms of biological role, this protein is involved in the repair of mismatches in DNA. It is possible that it carries out the mismatch recognition step. This protein has a weak ATPase activity. This is DNA mismatch repair protein MutS from Natronomonas pharaonis (strain ATCC 35678 / DSM 2160 / CIP 103997 / JCM 8858 / NBRC 14720 / NCIMB 2260 / Gabara) (Halobacterium pharaonis).